The following is a 396-amino-acid chain: Multidrug resistance protein MdtL (396 aa).

Residues 1 to 4 (MFRY) are Cytoplasmic-facing. Residues 5–25 (LLCCFGLVLMYPTGIDMYLVG) form a helical membrane-spanning segment. The Periplasmic segment spans residues 26–41 (LPQIANQLGATEAQLH). Residues 42 to 62 (IAFSVYLAGMATTMLFAGSLA) form a helical membrane-spanning segment. At 63–64 (DR) the chain is on the cytoplasmic side. The chain crosses the membrane as a helical span at residues 65–85 (IGRKPITLFSALLFALASYFA). Over 86–92 (ARSQSSD) the chain is Periplasmic. Residues 93–113 (LFLVARFVQGVGAGCCYVVAF) traverse the membrane as a helical segment. Over 114–131 (AILRDALDDKRRAKVLSM) the chain is Cytoplasmic. Residues 132–152 (VNGVTCIIPVIAPVIGHLIML) form a helical membrane-spanning segment. The Periplasmic segment spans residues 153–157 (RFPWP). Residues 158-178 (SLFYTMAVMGLLVFGLCLFVL) traverse the membrane as a helical segment. Residues 179–209 (RETYSKASFHSQTLPRVQTESFKQGFFISRV) lie on the Cytoplasmic side of the membrane. Residues 210-230 (VITTLGVTTILSYVNVSPMLI) form a helical membrane-spanning segment. At 231 to 242 (MGQMGFDRGQYS) the chain is on the periplasmic side. A helical membrane pass occupies residues 243–263 (NTMAMTALVSMLASFSTPFLL). The Cytoplasmic segment spans residues 264–277 (NQFKEKSLILFSQT). A run of 2 helical transmembrane segments spans residues 278–298 (LFAA…GQLF) and 299–319 (NLLG…VTMS). The Cytoplasmic segment spans residues 320 to 333 (QALSPFVARAGVAS). A helical membrane pass occupies residues 334–354 (SLLGIAQVCTSALYIWVMGLL). Over 355 to 360 (EVSAIN) the chain is Periplasmic. A helical transmembrane segment spans residues 361–381 (ILLAILAVGALISITLMLAVP). Topologically, residues 382-396 (KLSEMVANEQIPESA) are cytoplasmic.

This sequence belongs to the major facilitator superfamily. DHA1 family. MdtL (TC 2.A.1.2.22) subfamily.

Its subcellular location is the cell inner membrane. The polypeptide is Multidrug resistance protein MdtL (Shewanella sp. (strain ANA-3)).